A 515-amino-acid polypeptide reads, in one-letter code: Elongation factor 1-alpha S (515 aa).

A tr-type G domain is found at 5-258; it reads KTHINLVVIG…DAMKPPKRPT (254 aa). The G1 stretch occupies residues 14–21; it reads GHVDAGKS. 14-21 provides a ligand contact to GTP; it reads GHVDAGKS. Lys-55 carries the post-translational modification N6,N6-dimethyllysine. A G2 region spans residues 70–74; that stretch reads GITID. Lys-79 carries the N6,N6,N6-trimethyllysine modification. The segment at 91 to 94 is G3; it reads DAPG. Residues 91–95 and 151–154 contribute to the GTP site; these read DAPGH and NKMD. The interval 151 to 154 is G4; it reads NKMD. The segment at 187–206 is disordered; the sequence is KKDKGDKKKGDKKEKKDKKD. Residues 189–206 show a composition bias toward basic and acidic residues; sequence DKGDKKKGDKKEKKDKKD. Residues 222-224 form a G5 region; sequence SGW. Lys-289 bears the N6-methyllysine mark. Residue Lys-334 is modified to N6,N6,N6-trimethyllysine. The disordered stretch occupies residues 396-419; that stretch reads KRGKQTHDVSDDTEWATKDDAEPR. Positions 398 to 419 are enriched in basic and acidic residues; it reads GKQTHDVSDDTEWATKDDAEPR. N6,N6,N6-trimethyllysine is present on Lys-441.

It belongs to the TRAFAC class translation factor GTPase superfamily. Classic translation factor GTPase family. EF-Tu/EF-1A subfamily.

The protein localises to the cytoplasm. This protein promotes the GTP-dependent binding of aminoacyl-tRNA to the A-site of ribosomes during protein biosynthesis. This chain is Elongation factor 1-alpha S (TEF-S), found in Porphyra purpurea (Red seaweed).